A 443-amino-acid polypeptide reads, in one-letter code: ATP-dependent protease ATPase subunit HslU (443 aa).

ATP-binding positions include I20, 62–67 (GVGKTE), D255, E321, and R393.

This sequence belongs to the ClpX chaperone family. HslU subfamily. As to quaternary structure, a double ring-shaped homohexamer of HslV is capped on each side by a ring-shaped HslU homohexamer. The assembly of the HslU/HslV complex is dependent on binding of ATP.

It localises to the cytoplasm. Functionally, ATPase subunit of a proteasome-like degradation complex; this subunit has chaperone activity. The binding of ATP and its subsequent hydrolysis by HslU are essential for unfolding of protein substrates subsequently hydrolyzed by HslV. HslU recognizes the N-terminal part of its protein substrates and unfolds these before they are guided to HslV for hydrolysis. The chain is ATP-dependent protease ATPase subunit HslU from Helicobacter pylori (strain P12).